Consider the following 499-residue polypeptide: Protein flp (499 aa).

The next 4 membrane-spanning stretches (helical) occupy residues 6–26 (LYFL…IYIT), 389–409 (FNIV…FSAY), 433–453 (LTLC…YLIL), and 471–491 (LTLT…LLIL).

The protein resides in the cell membrane. In terms of biological role, its precise function is unknown. Has no penicillin-binding activity and is not involved in methicillin resistance. The protein is Protein flp (flp) of Staphylococcus aureus (strain MRSA252).